We begin with the raw amino-acid sequence, 602 residues long: MTAVPVSQIRNFSIIAHIDHGKSTLADRLLQVTGTVSDRNMTAQYLDNMDLERERGITIKLQAARMEYVADDGEKYILNLIDTPGHVDFTYEVSRSLAACEGALLVVDASQGVEAQTLANVYLAIENNLEIIPVLNKIDLPGAEPERVLDEIEEIIGLERTGAIRASAKEGIGIHDILEAIVHRIPPPADTVAEPLQALIFDSYYDAYRGVIVYFRVMSGSVKKGNKIRFMASGKEFEIDEIGVLKPFQVPVDELHAGEVGYIAAAIKLVQDARVGDTITLVSNPAATPLPGYQEAMPVVFCGLYPTDSDQFEDLREALDKLSLNDAALHFEPESSGALGFGFRCGFLGLLHMEVVQERLEREYDLDLVTTAPSVVYRVNKTDGTVLEVQNPADLPPSQLRTSIEEPYVKVELITPQEFVGTLMELSQGRRGIFKDMRYLTPTRTTLIYEIPLAEVITDFFDQMKSRSRGYASMEYQLIGFREGNLVRLDIVLNGEPVDSLSCITHADKAPEVGRQLTAKLKELIPRQQFQVPIQAAIGSKVVARENIAPLRKNVLAKCYGGDISRKKKLLEKQKKGKKRMKSIGSVDVPQEAFMAVLKLEG.

Residues 7-189 (SQIRNFSIIA…AIVHRIPPPA (183 aa)) form the tr-type G domain. GTP contacts are provided by residues 19–24 (DHGKST) and 136–139 (NKID).

The protein belongs to the TRAFAC class translation factor GTPase superfamily. Classic translation factor GTPase family. LepA subfamily.

It localises to the cell inner membrane. It catalyses the reaction GTP + H2O = GDP + phosphate + H(+). In terms of biological role, required for accurate and efficient protein synthesis under certain stress conditions. May act as a fidelity factor of the translation reaction, by catalyzing a one-codon backward translocation of tRNAs on improperly translocated ribosomes. Back-translocation proceeds from a post-translocation (POST) complex to a pre-translocation (PRE) complex, thus giving elongation factor G a second chance to translocate the tRNAs correctly. Binds to ribosomes in a GTP-dependent manner. In Gloeobacter violaceus (strain ATCC 29082 / PCC 7421), this protein is Elongation factor 4.